Here is a 376-residue protein sequence, read N- to C-terminus: Lipid-A-disaccharide synthase (376 aa).

Belongs to the LpxB family.

The catalysed reaction is a lipid X + a UDP-2-N,3-O-bis[(3R)-3-hydroxyacyl]-alpha-D-glucosamine = a lipid A disaccharide + UDP + H(+). It functions in the pathway bacterial outer membrane biogenesis; LPS lipid A biosynthesis. Functionally, condensation of UDP-2,3-diacylglucosamine and 2,3-diacylglucosamine-1-phosphate to form lipid A disaccharide, a precursor of lipid A, a phosphorylated glycolipid that anchors the lipopolysaccharide to the outer membrane of the cell. The polypeptide is Lipid-A-disaccharide synthase (Coxiella burnetii (strain RSA 331 / Henzerling II)).